A 32-amino-acid chain; its full sequence is Delta-actitoxin-Eqd1a (32 aa).

Belongs to the sea anemone short toxin (type III) family. Post-translationally, contains 4 disulfide bonds.

The protein resides in the secreted. Its subcellular location is the nematocyst. Its function is as follows. Binds specifically to sodium channels (Nav) of the axonal membrane of crayfish and prolongs the falling phase of the action potential. It also increases the maximum rates of rise of both action potential and resting potential. Is only active on crustaceans. The chain is Delta-actitoxin-Eqd1a from Entacmaea quadricolor (Bubble-tip anemone).